Consider the following 373-residue polypeptide: Meiosis-specific kinetochore protein (373 aa).

2 disordered regions span residues 1-91 and 250-276; these read MWPL…QDEK and STPE…LTST. A compositionally biased stretch (basic and acidic residues) spans 77-91; it reads SLQENRSSEDTQDEK. Positions 275 to 277 match the POLO box domain (PBD)-binding motif; that stretch reads STP. The tract at residues 332–335 is required for localization to kinetochores; that stretch reads EICC.

Interacts with CENPC. Interacts with PLK1; required for recruitment of PLK1 at kinetochores.

It localises to the chromosome. Its subcellular location is the centromere. The protein localises to the kinetochore. Its function is as follows. Key regulator of kinetochore function during meiosis I: required both for mono-orientation of kinetochores on sister chromosomes and protection of centromeric cohesin from separase-mediated cleavage. Acts by facilitating kinetochore mono-orientation during meiosis I, when kinetochores on sister chromosomes face the same direction and are thus captured and pulled by spindle fibers from the same pole. Also required to prevent cleavage of cohesin at centromeres during meiosis I, possibly by acting as a regulator of the shugoshin-dependent protection pathway. Acts in collaboration with PLK1: required for PLK1 enrichment to kinetochores. Not required during meiosis II or mitosis. The protein is Meiosis-specific kinetochore protein of Homo sapiens (Human).